The chain runs to 444 residues: Proline--tRNA ligase (444 aa).

It belongs to the class-II aminoacyl-tRNA synthetase family. ProS type 2 subfamily. Homodimer.

It localises to the cytoplasm. The enzyme catalyses tRNA(Pro) + L-proline + ATP = L-prolyl-tRNA(Pro) + AMP + diphosphate. Functionally, catalyzes the attachment of proline to tRNA(Pro) in a two-step reaction: proline is first activated by ATP to form Pro-AMP and then transferred to the acceptor end of tRNA(Pro). This chain is Proline--tRNA ligase, found in Bradyrhizobium sp. (strain BTAi1 / ATCC BAA-1182).